The primary structure comprises 549 residues: Beta-mannosyltransferase 3 (549 aa).

The Cytoplasmic portion of the chain corresponds to 1 to 37 (MFESDLSFYSALLILCCPISIVFFKKFPIKGYTGANK). Residues 38–58 (VSLFLQCLIAILNLNILYSFI) form a helical membrane-spanning segment. Residues 59-549 (NSLTITLGHD…DTMGWDKLSR (491 aa)) are Extracellular-facing.

The protein belongs to the BMT family.

The protein resides in the membrane. Functionally, beta-mannosyltransferase involved in cell wall biosynthesis. Required for addition of the second beta-mannose residue to acid-stable fraction of cell wall phosphopeptidomannan, and in elongation of beta-mannose chains on the phosphopeptidomannan acid-labile fraction. The protein is Beta-mannosyltransferase 3 (BMT3) of Candida albicans (strain SC5314 / ATCC MYA-2876) (Yeast).